We begin with the raw amino-acid sequence, 103 residues long: MSVQGIEGVLQQLQVTALQASGSAKTLPAEAGFASELKAAIGKISENQQVARTSAQNFELGVPGVGLNDVMVNAQKSSVSLQLGIQVRNKLVAAYQEVMNMGV.

The protein belongs to the FliE family.

The protein localises to the bacterial flagellum basal body. This chain is Flagellar hook-basal body complex protein FliE, found in Yersinia pestis.